We begin with the raw amino-acid sequence, 365 residues long: TD and POZ domain-containing protein 1-like (365 aa).

The 131-residue stretch at 19–149 (KFCYKWTISN…EDQLTICCKV (131 aa)) folds into the MATH domain. Residues 188–255 (TDCCLLVAGH…IYTGKAPYLH (68 aa)) form the BTB domain.

It belongs to the Tdpoz family.

The polypeptide is TD and POZ domain-containing protein 1-like (Mus musculus (Mouse)).